The primary structure comprises 155 residues: uncharacterized protein (155 aa).

The region spanning 37 to 140 (IAELRKKLNL…GGYRLKTTDN (104 aa)) is the SCP domain.

This is an uncharacterized protein from Borreliella burgdorferi (strain ATCC 35210 / DSM 4680 / CIP 102532 / B31) (Borrelia burgdorferi).